Consider the following 224-residue polypeptide: Octanoyltransferase (224 aa).

The BPL/LPL catalytic domain maps to 29 to 224; sequence EATPDALWIC…GQKLATYLAP (196 aa). Substrate is bound by residues 68–75, 157–159, and 170–172; these read RGGQVTFH, ALG, and GVA. The Acyl-thioester intermediate role is filled by C188.

Belongs to the LipB family.

The protein localises to the cytoplasm. It catalyses the reaction octanoyl-[ACP] + L-lysyl-[protein] = N(6)-octanoyl-L-lysyl-[protein] + holo-[ACP] + H(+). It participates in protein modification; protein lipoylation via endogenous pathway; protein N(6)-(lipoyl)lysine from octanoyl-[acyl-carrier-protein]: step 1/2. Functionally, catalyzes the transfer of endogenously produced octanoic acid from octanoyl-acyl-carrier-protein onto the lipoyl domains of lipoate-dependent enzymes. Lipoyl-ACP can also act as a substrate although octanoyl-ACP is likely to be the physiological substrate. The chain is Octanoyltransferase from Polaromonas naphthalenivorans (strain CJ2).